The chain runs to 359 residues: Protein mab-21-like 2 (359 aa).

This sequence belongs to the mab-21 family.

The protein localises to the nucleus. It localises to the cytoplasm. Required for several aspects of embryonic development including normal development of the eye. This chain is Protein mab-21-like 2 (MAB21L2), found in Homo sapiens (Human).